Reading from the N-terminus, the 82-residue chain is MAKNLNTVSFTVLLLVLLMASTGILETEAACFKFLGECGAVPFPGTNADCTSCCVGNFGSAVCAGRVEVEGGVKHCHCYGTS.

The first 29 residues, 1–29 (MAKNLNTVSFTVLLLVLLMASTGILETEA), serve as a signal peptide directing secretion. 3 disulfide bridges follow: Cys-38/Cys-63, Cys-50/Cys-76, and Cys-54/Cys-78.

Belongs to the DEFL family.

It is found in the secreted. The chain is Defensin-like protein 208 from Arabidopsis thaliana (Mouse-ear cress).